Reading from the N-terminus, the 935-residue chain is MAPAEILNGKEISAQIRARLKNQVTQLKEQVPGFTPRLAILQVGNRDDSNLYINVKLKAAEEIGIKATHIKLPRTTTESEVMKYITSLNEDSTVHGFLVQLPLDSENSINTEEVINAIAPEKDVDGLTSINAGKLARGDLNDCFIPCTPKGCLELIKETGVPIAGRHAVVVGRSKIVGAPMHDLLLWNNATVTTCHSKTAHLDEEVNKGDILVVATGQPEMVKGEWIKPGAIVIDCGINYVPDDKKPNGRKVVGDVAYDEAKERASFITPVPGGVGPMTVAMLMQSTVESAKRFLEKFKPGKWMIQYNNLNLKTPVPSDIDISRSCKPKPIGKLAREIGLLSEEVELYGETKAKVLLSALERLKHRPDGKYVVVTGITPTPLGEGKSTTTIGLVQALGAHLYQNVFACVRQPSQGPTFGIKGGAAGGGYSQVIPMEEFNLHLTGDIHAITAANNLVAAAIDARIFHELTQTDKALFNRLVPSVNGVRRFSDIQIRRLKRLGIEKTDPTTLTDEEINRFARLDIDPETITWQRVLDTNDRFLRKITIGQAPTEKGHTRTAQFDISVASEIMAVLALTTSLEDMRERLGKMVVASSKKGEPVSAEDLGVSGALTVLMKDAIKPNLMQTLEGTPVFVHAGPFANIAHGNSSIIADRIALKLVGPEGFVVTEAGFGADIGMEKFFNIKCRYSGLCPHVVVLVATVRALKMHGGGPTVTAGLPLPKAYIQENLELVEKGFSNLKKQIENARMFGIPVVVAVNAFKTDTESELDLISRLSREHGAFDAVKCTHWAEGGKGALALAQAVQRAAQAPSSFQLLYDLKLPVEDKIRIIAQKIYGADDIELLPEAQHKAEVYTKQGFGNLPICMAKTHLSLSHNPEQKGVPTGFILPIRDIRASVGAGFLYPLVGTMSTMPGLPTRPCFYDIDLDPETEQVNGLF.

Met-1 carries the post-translational modification N-acetylmethionine. A methylenetetrahydrofolate dehydrogenase and methenyltetrahydrofolate cyclohydrolase (D/C) domain region spans residues 2 to 291 (APAEILNGKE…MLMQSTVESA (290 aa)). Substrate is bound by residues 52-56 (YINVK) and 99-101 (VQL). The active site involves Lys-56. NADP(+) is bound by residues 172-174 (GRS) and Ser-197. 272–276 (PGGVG) provides a ligand contact to substrate. Residues 310-935 (LNLKTPVPSD…PETEQVNGLF (626 aa)) form a formyltetrahydrofolate synthetase domain region. Residue Ser-318 is modified to Phosphoserine. 380-387 (TPLGEGKS) is an ATP binding site. Phosphoserine is present on residues Ser-413 and Ser-490.

In the N-terminal section; belongs to the tetrahydrofolate dehydrogenase/cyclohydrolase family. The protein in the C-terminal section; belongs to the formate--tetrahydrofolate ligase family. As to quaternary structure, homodimer. As to expression, ubiquitous.

The protein resides in the cytoplasm. It catalyses the reaction (6R)-5,10-methylene-5,6,7,8-tetrahydrofolate + NADP(+) = (6R)-5,10-methenyltetrahydrofolate + NADPH. The catalysed reaction is (6R)-5,10-methenyltetrahydrofolate + H2O = (6R)-10-formyltetrahydrofolate + H(+). The enzyme catalyses (6S)-5,6,7,8-tetrahydrofolate + formate + ATP = (6R)-10-formyltetrahydrofolate + ADP + phosphate. It functions in the pathway one-carbon metabolism; tetrahydrofolate interconversion. Its function is as follows. Trifunctional enzyme that catalyzes the interconversion of three forms of one-carbon-substituted tetrahydrofolate: (6R)-5,10-methylene-5,6,7,8-tetrahydrofolate, 5,10-methenyltetrahydrofolate and (6S)-10-formyltetrahydrofolate. These derivatives of tetrahydrofolate are differentially required in nucleotide and amino acid biosynthesis, (6S)-10-formyltetrahydrofolate being required for purine biosynthesis while (6R)-5,10-methylene-5,6,7,8-tetrahydrofolate is used for serine and methionine biosynthesis for instance. The polypeptide is C-1-tetrahydrofolate synthase, cytoplasmic (MTHFD1) (Homo sapiens (Human)).